A 420-amino-acid chain; its full sequence is Type II methyltransferase M.HgiCI (420 aa).

Residues leucine 2 to alanine 417 enclose the SAM-dependent MTase C5-type domain. Cysteine 75 is a catalytic residue.

This sequence belongs to the class I-like SAM-binding methyltransferase superfamily. C5-methyltransferase family.

The catalysed reaction is a 2'-deoxycytidine in DNA + S-adenosyl-L-methionine = a 5-methyl-2'-deoxycytidine in DNA + S-adenosyl-L-homocysteine + H(+). A methylase that recognizes the double-stranded sequence 5'-GGYRCC-3', methylates C-5 on both strands, and protects the DNA from cleavage by the HgiCI endonuclease. This Herpetosiphon aurantiacus (Herpetosiphon giganteus) protein is Type II methyltransferase M.HgiCI (hgiCIM).